The primary structure comprises 352 residues: Heat-inducible transcription repressor HrcA (352 aa).

The protein belongs to the HrcA family.

Its function is as follows. Negative regulator of class I heat shock genes (grpE-dnaK-dnaJ and groELS operons). Prevents heat-shock induction of these operons. This chain is Heat-inducible transcription repressor HrcA, found in Thermosynechococcus vestitus (strain NIES-2133 / IAM M-273 / BP-1).